The sequence spans 441 residues: Polyketide methyltransferase ustM (441 aa).

Residues 266–368 are methyltransferase (CMeT) domain; that stretch reads LEVGAGLGGT…VRKLLRGGGF (103 aa).

Belongs to the methyltransferase superfamily.

It functions in the pathway secondary metabolite biosynthesis. In terms of biological role, polyketide methyltransferase; part of the gene cluster that mediates the biosynthesis of ustilaginoidins, dimeric gamma-naphthopyrones isolated from different fungal species. The first step in the biosynthesis of ustilaginoidins is the production of gamma-naphthopyrone precursor YWA1 by the non-reducing polyketide synthase ustP, via condensation of one acetyl-CoA starter unit with 6 malonyl-CoA units. YWA1 is then probably substrate of the ustZ to yield norrubrofusarin via a dehydration reaction. A key enzyme in the biosynthetic pathway is the laccase ustL, which catalyzes the oxidative dimerization of norrubrofusarin to ustilaginoidin A. It can produce the M- and P-atropisomers in varying amounts, depending on the reaction conditions. For the biosynthesis of 3-methylustilaginoid in derivatives such as chaetochromin A, a methylated derivative of YWA1 is required. The C-methylation is considered to be catalyzed by ustM, the phosphopantetheine attachment site of which indicates that it acts on the growing polyketide chain before release of the product. For the biosynthesis of chaetochromin A, it is assumed that saturation of the D2 double bond takes place before dimerization, and is probably catalyzed by an external reductase because no candidate gene was identified within the cluster. This is Polyketide methyltransferase ustM from Ustilaginoidea virens (Rice false smut fungus).